The sequence spans 1422 residues: FH1/FH2 domain-containing protein 3 (1422 aa).

Positions 18–411 constitute a GBD/FH3 domain; it reads NSTNFPEPSR…NFGNNSYHSS (394 aa). Disordered stretches follow at residues 323 to 464, 521 to 666, 687 to 708, 754 to 781, 821 to 849, 1262 to 1305, 1320 to 1357, and 1374 to 1410; these read RHED…RRRQ, ACLA…GVNG, RKSP…QEAE, SGDL…VQPK, LGHR…PPLL, QQKQ…SYAE, SSPS…SPNV, and TQVP…EEAR. Ser-345 bears the Phosphoserine mark. Positions 357–366 are enriched in basic residues; the sequence is LDRRRSRRHS. The segment covering 367–390 has biased composition (polar residues); sequence VQSIKSTLSAPTSPCSQSAPSFKP. Ser-375 bears the Phosphoserine mark. A compositionally biased stretch (low complexity) spans 410–430; sequence SSRPSSGSSVPTTPTSSVSPP. Over residues 438–449 the composition is skewed to polar residues; that stretch reads SSPSGLLTSSFR. A coiled-coil region spans residues 448-480; that stretch reads FRQHQESLAAERERRRQEREERLQRIEREERNK. Positions 450–464 are enriched in basic and acidic residues; the sequence is QHQESLAAERERRRQ. Residues 521–535 show a composition bias toward low complexity; that stretch reads ACLAPLSHSPSSSDS. A compositionally biased stretch (polar residues) spans 536–547; the sequence is QEALTVSASSPG. 2 stretches are compositionally biased toward acidic residues: residues 559-569 and 592-603; these read PEPESEAEPEA and ETEVEQALEQEP. Positions 604-624 are enriched in basic and acidic residues; sequence EERASLSEKERQNEGVNERDN. Low complexity predominate over residues 626–635; the sequence is SASSVSSSSS. The segment covering 637–651 has biased composition (basic and acidic residues); it reads LEREEKEDKLSRDRT. The residue at position 763 (Ser-763) is a Phosphoserine. Position 775 is a phosphothreonine (Thr-775). Over residues 827–849 the composition is skewed to pro residues; it reads PGPPPPPPPTFLGLPPPPPPPLL. The FH1 domain maps to 827–858; that stretch reads PGPPPPPPPTFLGLPPPPPPPLLDSIPPPPVP. The 397-residue stretch at 883–1279 folds into the FH2 domain; it reads GQPTFTKKKK…HRERNKTRGK (397 aa). Basic residues predominate over residues 1264–1278; sequence KQKRANHRERNKTRG. Residues 1359-1391 enclose the DAD domain; that stretch reads DDAADEIMDRIVKSATQVPSQRVVPRERKRSRA. A compositionally biased stretch (basic residues) spans 1385–1400; it reads ERKRSRANRKSLRRTL.

This sequence belongs to the formin homology family. In terms of assembly, interacts with nestin/NES-based interfilament (IF). Interacts with SQSTM1; isoform 4 threonine phosphorylation disrupts SQSTM1-binding. Post-translationally, phosphorylated on Thr-1474 and Thr-1476 by CK2. As to expression, expressed in the heart, kidney and brain. May be down-regulated in various types of heart diseases, including idiopathic dilated, ventricular dilated, familial dilated and perinatal dilated cardiomyopathies, as well as ischemic heart disease (at protein level).

The protein resides in the cytoplasm. It localises to the cytoskeleton. It is found in the myofibril. The protein localises to the sarcomere. Its subcellular location is the z line. Actin-organizing protein that may cause stress fiber formation together with cell elongation. Isoform 4 may play a role in actin filament polymerization in cardiomyocytes. The protein is FH1/FH2 domain-containing protein 3 (FHOD3) of Homo sapiens (Human).